Consider the following 177-residue polypeptide: Alkyl hydroperoxide reductase AhpD (177 aa).

Cys-131 (proton donor) is an active-site residue. Cys-131 and Cys-134 are joined by a disulfide. The active-site Cysteine sulfenic acid (-SOH) intermediate is the Cys-134.

Belongs to the AhpD family. As to quaternary structure, homotrimer.

It catalyses the reaction N(6)-[(R)-dihydrolipoyl]-L-lysyl-[lipoyl-carrier protein] + a hydroperoxide = N(6)-[(R)-lipoyl]-L-lysyl-[lipoyl-carrier protein] + an alcohol + H2O. In terms of biological role, antioxidant protein with alkyl hydroperoxidase activity. Required for the reduction of the AhpC active site cysteine residues and for the regeneration of the AhpC enzyme activity. This chain is Alkyl hydroperoxide reductase AhpD, found in Streptomyces avermitilis (strain ATCC 31267 / DSM 46492 / JCM 5070 / NBRC 14893 / NCIMB 12804 / NRRL 8165 / MA-4680).